Consider the following 320-residue polypeptide: tRNA dimethylallyltransferase (320 aa).

5–12 lines the ATP pocket; it reads GPTAVGKS. 7–12 lines the substrate pocket; that stretch reads TAVGKS. An interaction with substrate tRNA region spans residues 30-33; sequence DSMQ.

The protein belongs to the IPP transferase family. Monomer. The cofactor is Mg(2+).

The catalysed reaction is adenosine(37) in tRNA + dimethylallyl diphosphate = N(6)-dimethylallyladenosine(37) in tRNA + diphosphate. Functionally, catalyzes the transfer of a dimethylallyl group onto the adenine at position 37 in tRNAs that read codons beginning with uridine, leading to the formation of N6-(dimethylallyl)adenosine (i(6)A). This Heliobacterium modesticaldum (strain ATCC 51547 / Ice1) protein is tRNA dimethylallyltransferase.